The following is an 83-amino-acid chain: UPF0457 protein YnzG (83 aa).

Belongs to the UPF0457 family.

The polypeptide is UPF0457 protein YnzG (ynzG) (Bacillus subtilis (strain 168)).